Reading from the N-terminus, the 178-residue chain is Oligoribonuclease (178 aa).

One can recognise an Exonuclease domain in the interval Leu-7 to Leu-168. Tyr-128 is an active-site residue.

Belongs to the oligoribonuclease family.

It localises to the cytoplasm. In terms of biological role, 3'-to-5' exoribonuclease specific for small oligoribonucleotides. This is Oligoribonuclease from Francisella tularensis subsp. holarctica (strain FTNF002-00 / FTA).